The chain runs to 313 residues: MTQPIVVAALYKFVTLEDYVNLREPLLQAMVDNGIKGTLLIAEEGINGTVSGSREGIDGLLAWLRNDPRMVDIDHKESYCDEQPFYRTKVKLKKEIVTLGVEGVDPNKKVGTYVEPKDWNALISDPEVLLIDTRNDYEVSIGTFEGAIDPKTTSFREFPDYIKEHFDPAVHKKVAMFCTGGIRCEKASSYMLGEGFEEVYHLKGGILKYLEEVPQEETKWQGDCFVFDNRVTVRHDLSEGDYDQCHACRTPVSVEDRASEHYVAGISCPHCWDTLSEKTRRSAIDRQKQIELAKARNMPHPIGYNYKQASTEA.

The Rhodanese domain occupies 124-218 (SDPEVLLIDT…YLEEVPQEET (95 aa)). The Cysteine persulfide intermediate role is filled by cysteine 178.

Belongs to the TrhO family.

It catalyses the reaction uridine(34) in tRNA + AH2 + O2 = 5-hydroxyuridine(34) in tRNA + A + H2O. In terms of biological role, catalyzes oxygen-dependent 5-hydroxyuridine (ho5U) modification at position 34 in tRNAs. This is tRNA uridine(34) hydroxylase from Pseudomonas fluorescens (strain Pf0-1).